A 526-amino-acid polypeptide reads, in one-letter code: Berberine bridge enzyme-like 11 (526 aa).

The signal sequence occupies residues 1 to 21; the sequence is MEKLLIICMLLISVLVATSQS. Residues Cys-31 and Cys-94 are joined by a disulfide bond. Asn-52, Asn-136, Asn-273, and Asn-482 each carry an N-linked (GlcNAc...) asparagine glycan. Residues 72–247 form the FAD-binding PCMH-type domain; it reads TTPKPIAIIT…MGYKIRLVPV (176 aa). Residues 109–171 constitute a cross-link (6-(S-cysteinyl)-8alpha-(pros-histidyl)-FAD (His-Cys)); sequence HDFEGLSYTS…NVLGFPAGLC (63 aa).

The protein belongs to the oxygen-dependent FAD-linked oxidoreductase family. FAD is required as a cofactor. Post-translationally, the FAD cofactor is bound via a bicovalent 6-S-cysteinyl, 8alpha-N1-histidyl FAD linkage.

It localises to the secreted. It is found in the cell wall. This chain is Berberine bridge enzyme-like 11, found in Arabidopsis thaliana (Mouse-ear cress).